The following is an 85-amino-acid chain: Small ribosomal subunit protein bS16c (85 aa).

This sequence belongs to the bacterial ribosomal protein bS16 family.

It is found in the plastid. It localises to the chloroplast. The polypeptide is Small ribosomal subunit protein bS16c (Cucumis sativus (Cucumber)).